A 309-amino-acid chain; its full sequence is Probable manganese-dependent inorganic pyrophosphatase (309 aa).

6 residues coordinate Mn(2+): His9, Asp13, Asp15, Asp75, His97, and Asp149.

Belongs to the PPase class C family. It depends on Mn(2+) as a cofactor.

The protein localises to the cytoplasm. It carries out the reaction diphosphate + H2O = 2 phosphate + H(+). This chain is Probable manganese-dependent inorganic pyrophosphatase, found in Bacillus cereus (strain B4264).